Reading from the N-terminus, the 283-residue chain is Aldo-keto reductase Mmcs_1938 (283 aa).

Residue tyrosine 58 is the Proton donor of the active site. NADPH-binding residues include glycine 196, leucine 198, valine 200, isoleucine 236, arginine 238, serine 239, alanine 240, arginine 244, serine 247, asparagine 248, and arginine 274.

It belongs to the aldo/keto reductase family.

This Mycobacterium sp. (strain MCS) protein is Aldo-keto reductase Mmcs_1938.